Reading from the N-terminus, the 101-residue chain is Ascorbate-specific PTS system EIIB component (101 aa).

The PTS EIIB type-2 domain maps to 3–96 (VRILAVCGNG…KLLEVIKEHF (94 aa)). Catalysis depends on C9, which acts as the Phosphocysteine intermediate. Residue C9 is modified to Phosphocysteine.

It localises to the cytoplasm. It carries out the reaction N(pros)-phospho-L-histidyl-[protein] + L-ascorbate(out) = L-ascorbate 6-phosphate(in) + L-histidyl-[protein]. In terms of biological role, the phosphoenolpyruvate-dependent sugar phosphotransferase system (sugar PTS), a major carbohydrate active transport system, catalyzes the phosphorylation of incoming sugar substrates concomitantly with their translocation across the cell membrane. The enzyme II UlaABC PTS system is involved in ascorbate transport. The chain is Ascorbate-specific PTS system EIIB component (ulaB) from Salmonella choleraesuis (strain SC-B67).